Here is a 373-residue protein sequence, read N- to C-terminus: MVSHPIWAEIDLSAIKNNIKEIRRITNPKSQVMAVVKANAYGHGSVEVSKICLENGADRLAVARSTEALELRDAGITCPILVFGYVTEEEILKMVENDITLTVYSLEIANSIQKIAEKLGKHSKIHIKVDTGMSRLGFLPEKSSVETIKKIRELENIEVEGIYTHFADADNSDKTYTTMQFSKFTSFLHDLEENGIDIPIKHASNSAAIIDHPETHLNMVRPGIILYGLYPSELVHKERINLQPAMSLKVLVTHVKDVPENTKISYGCTFETKKQSKIASLPIGYADGFTRMLRNGNVLIHGLRVPVVGRICMDQCMIDVTSIENVNVGDVVTVFGKDGTEKISIEEFGNKLGTINYELVCMVSARVPRIYLH.

Lys-37 acts as the Proton acceptor; specific for D-alanine in catalysis. At Lys-37 the chain carries N6-(pyridoxal phosphate)lysine. Arg-135 lines the substrate pocket. The active-site Proton acceptor; specific for L-alanine is Tyr-266. Position 313 (Met-313) interacts with substrate.

The protein belongs to the alanine racemase family. Requires pyridoxal 5'-phosphate as cofactor.

It carries out the reaction L-alanine = D-alanine. Its pathway is amino-acid biosynthesis; D-alanine biosynthesis; D-alanine from L-alanine: step 1/1. Its function is as follows. Catalyzes the interconversion of L-alanine and D-alanine. This organism is able to use both L- and D-alanine as a nitrogen source. May also prevent D-alanine from interfering with the use of L-alanine. This is Alanine racemase (alr) from Methanococcus maripaludis (strain DSM 14266 / JCM 13030 / NBRC 101832 / S2 / LL).